The primary structure comprises 616 residues: Dihydroxy-acid dehydratase (616 aa).

Mg(2+) is bound at residue Asp81. A [2Fe-2S] cluster-binding site is contributed by Cys122. The Mg(2+) site is built by Asp123 and Lys124. Position 124 is an N6-carboxylysine (Lys124). Cys195 is a binding site for [2Fe-2S] cluster. Glu491 contacts Mg(2+). The Proton acceptor role is filled by Ser517.

This sequence belongs to the IlvD/Edd family. In terms of assembly, homodimer. [2Fe-2S] cluster serves as cofactor. Mg(2+) is required as a cofactor.

The catalysed reaction is (2R)-2,3-dihydroxy-3-methylbutanoate = 3-methyl-2-oxobutanoate + H2O. It carries out the reaction (2R,3R)-2,3-dihydroxy-3-methylpentanoate = (S)-3-methyl-2-oxopentanoate + H2O. It functions in the pathway amino-acid biosynthesis; L-isoleucine biosynthesis; L-isoleucine from 2-oxobutanoate: step 3/4. The protein operates within amino-acid biosynthesis; L-valine biosynthesis; L-valine from pyruvate: step 3/4. Its function is as follows. Functions in the biosynthesis of branched-chain amino acids. Catalyzes the dehydration of (2R,3R)-2,3-dihydroxy-3-methylpentanoate (2,3-dihydroxy-3-methylvalerate) into 2-oxo-3-methylpentanoate (2-oxo-3-methylvalerate) and of (2R)-2,3-dihydroxy-3-methylbutanoate (2,3-dihydroxyisovalerate) into 2-oxo-3-methylbutanoate (2-oxoisovalerate), the penultimate precursor to L-isoleucine and L-valine, respectively. The protein is Dihydroxy-acid dehydratase of Methylocella silvestris (strain DSM 15510 / CIP 108128 / LMG 27833 / NCIMB 13906 / BL2).